Reading from the N-terminus, the 315-residue chain is MAACVDKWPPAAYLCRLPEKFYCVLPDCTATDRPVVTASAAPAPAASGSSGDYVWDVLRAEAQDDADDEPLLRKFYHDLVLSRPSLESALASLLAAKLCIPGALPQDQLRDLLAGALAAHPEAGRAARADLVAARDRDPACAKMVHCFLYYKGFLALQAHRAAHALWSDNRRAPALLLQSRASEVFGVDIHPGARIGCGILLDHATGVVIGETAVVGYDVSILHGVTLGGTGKESGDRHPKVGDGVLIGAGASVLGNVHIGDGAKIGAGAVVLRDVADGTTAVGNPAKPIIGKKAAPQRRPEELPGVTMEQRWSD.

Residues 287–315 (AKPIIGKKAAPQRRPEELPGVTMEQRWSD) form a disordered region.

This sequence belongs to the transferase hexapeptide repeat family. Homomultimer.

It carries out the reaction L-serine + acetyl-CoA = O-acetyl-L-serine + CoA. It functions in the pathway amino-acid biosynthesis; L-cysteine biosynthesis; L-cysteine from L-serine: step 1/2. The chain is Probable serine acetyltransferase 4 (SAT4) from Oryza sativa subsp. japonica (Rice).